Here is a 463-residue protein sequence, read N- to C-terminus: Quinolone resistance protein NorB (463 aa).

A run of 14 helical transmembrane segments spans residues 17-37 (IGIV…VNVV), 53-73 (IAVS…GGLA), 86-106 (IILN…LLLI), 107-127 (IGRL…LSII), 142-162 (YWSI…GAVA), 165-185 (LGWR…LFLI), 201-221 (FDIK…ILIT), 230-250 (SLLF…FIVL), 273-293 (TASN…NTFV), 299-319 (YSSL…LIMI), 334-354 (PMLI…LTFL), 357-377 (IFYV…LGIY), 403-423 (MASA…YAIV), and 435-455 (IALW…LLLV).

Belongs to the major facilitator superfamily. TCR/Tet family.

The protein localises to the cell membrane. Functionally, multidrug efflux pump that acts independently of NorA and is one of the factors that confers resistance against diverse quinolones and chemical compounds. In Staphylococcus aureus (strain USA300), this protein is Quinolone resistance protein NorB (norB).